Here is a 94-residue protein sequence, read N- to C-terminus: Exodeoxyribonuclease 7 small subunit (94 aa).

Belongs to the XseB family. In terms of assembly, heterooligomer composed of large and small subunits.

The protein resides in the cytoplasm. It carries out the reaction Exonucleolytic cleavage in either 5'- to 3'- or 3'- to 5'-direction to yield nucleoside 5'-phosphates.. Bidirectionally degrades single-stranded DNA into large acid-insoluble oligonucleotides, which are then degraded further into small acid-soluble oligonucleotides. This is Exodeoxyribonuclease 7 small subunit from Trichormus variabilis (strain ATCC 29413 / PCC 7937) (Anabaena variabilis).